Consider the following 399-residue polypeptide: Ribonucleoside-diphosphate reductase small chain 1 (399 aa).

Phosphoserine is present on residues serine 15, serine 24, and serine 41. Residues aspartate 145, glutamate 176, and histidine 179 each coordinate Fe cation. Tyrosine 183 is an active-site residue. Residues glutamate 239, glutamate 273, and histidine 276 each coordinate Fe cation.

This sequence belongs to the ribonucleoside diphosphate reductase small chain family. In terms of assembly, heterotetramer of two large (R1) and two small (R2) subunits. S.cerevisiae has two different R1 subunits (RNR1 and RNR3) and two different R2 subunits (RNR2 and RNR4). The functional form of the small subunits is a RNR2-RNR4 heterodimer, where RNR2 provides the iron-radical center and RNR4 is required for proper folding of RNR2 and assembly with the large subunits. Under normal growth conditions, the active form of the large subunits is a homodimer of the constitutively expressed RNR1. In damaged cells or cells arrested for DNA synthesis, the reductase consists of multiple species because of the association of the small subunits (RNR2-RNR4) with either the RNR1 homodimer or a heterodimer of RNR1 and the damage-inducible RNR3. Interacts with DIF1. It depends on Fe cation as a cofactor.

Its subcellular location is the nucleus. The catalysed reaction is a 2'-deoxyribonucleoside 5'-diphosphate + [thioredoxin]-disulfide + H2O = a ribonucleoside 5'-diphosphate + [thioredoxin]-dithiol. Its function is as follows. Provides the precursors necessary for DNA synthesis. Catalyzes the biosynthesis of deoxyribonucleotides from the corresponding ribonucleotides. RNR2 provides the diiron-tyrosyl radical center. This is Ribonucleoside-diphosphate reductase small chain 1 (RNR2) from Saccharomyces cerevisiae (strain ATCC 204508 / S288c) (Baker's yeast).